The following is a 455-amino-acid chain: Homogentisate 1,2-dioxygenase (455 aa).

H308 acts as the Proton acceptor in catalysis. H351 and E357 together coordinate Fe cation. Homogentisate contacts are provided by Y366 and H387. H387 provides a ligand contact to Fe cation.

Belongs to the homogentisate dioxygenase family. As to quaternary structure, hexamer; dimer of trimers. Fe cation serves as cofactor.

It catalyses the reaction homogentisate + O2 = 4-maleylacetoacetate + H(+). It functions in the pathway amino-acid degradation; L-phenylalanine degradation; acetoacetate and fumarate from L-phenylalanine: step 4/6. Involved in the catabolism of homogentisate (2,5-dihydroxyphenylacetate or 2,5-OH-PhAc), a central intermediate in the degradation of phenylalanine and tyrosine. Catalyzes the oxidative ring cleavage of the aromatic ring of homogentisate to yield maleylacetoacetate. The protein is Homogentisate 1,2-dioxygenase of Xanthomonas campestris pv. campestris (strain 8004).